A 730-amino-acid polypeptide reads, in one-letter code: Elongation factor 2 (730 aa).

The 242-residue stretch at 19–260 (VMIRNIAIIA…MVIRFLPSPI (242 aa)) folds into the tr-type G domain. GTP is bound by residues 28 to 35 (AHIDHGKT), 94 to 98 (DTPGH), and 148 to 151 (NKVD). Diphthamide is present on His596.

It belongs to the TRAFAC class translation factor GTPase superfamily. Classic translation factor GTPase family. EF-G/EF-2 subfamily.

Its subcellular location is the cytoplasm. In terms of biological role, catalyzes the GTP-dependent ribosomal translocation step during translation elongation. During this step, the ribosome changes from the pre-translocational (PRE) to the post-translocational (POST) state as the newly formed A-site-bound peptidyl-tRNA and P-site-bound deacylated tRNA move to the P and E sites, respectively. Catalyzes the coordinated movement of the two tRNA molecules, the mRNA and conformational changes in the ribosome. The chain is Elongation factor 2 (fusA) from Methanococcoides methylutens.